A 310-amino-acid chain; its full sequence is HPr kinase/phosphorylase (310 aa).

Catalysis depends on residues H138 and K159. 153–160 contributes to the ATP binding site; that stretch reads GGSGVGKS. S160 serves as a coordination point for Mg(2+). D177 serves as the catalytic Proton acceptor; for phosphorylation activity. Proton donor; for dephosphorylation activity. Residues 201–210 are important for the catalytic mechanism of both phosphorylation and dephosphorylation; that stretch reads LEIRGLGIIN. Residue E202 coordinates Mg(2+). R243 is a catalytic residue. The interval 264–269 is important for the catalytic mechanism of dephosphorylation; sequence PVRPGR.

This sequence belongs to the HPrK/P family. As to quaternary structure, homohexamer. It depends on Mg(2+) as a cofactor.

The enzyme catalyses [HPr protein]-L-serine + ATP = [HPr protein]-O-phospho-L-serine + ADP + H(+). The catalysed reaction is [HPr protein]-O-phospho-L-serine + phosphate + H(+) = [HPr protein]-L-serine + diphosphate. Its function is as follows. Catalyzes the ATP- as well as the pyrophosphate-dependent phosphorylation of a specific serine residue in HPr, a phosphocarrier protein of the phosphoenolpyruvate-dependent sugar phosphotransferase system (PTS). HprK/P also catalyzes the pyrophosphate-producing, inorganic phosphate-dependent dephosphorylation (phosphorolysis) of seryl-phosphorylated HPr (P-Ser-HPr). The two antagonistic activities of HprK/P are regulated by several intracellular metabolites, which change their concentration in response to the absence or presence of rapidly metabolisable carbon sources (glucose, fructose, etc.) in the growth medium. Also phosphorylates/dephosphorylates the HPr-like catabolite repression protein crh on a specific serine residue. Therefore, by controlling the phosphorylation state of HPr and crh, HPrK/P is a sensor enzyme that plays a major role in the regulation of carbon metabolism and sugar transport: it mediates carbon catabolite repression (CCR), and regulates PTS-catalyzed carbohydrate uptake and inducer exclusion. The sequence is that of HPr kinase/phosphorylase from Shouchella clausii (strain KSM-K16) (Alkalihalobacillus clausii).